A 198-amino-acid chain; its full sequence is Recombination protein RecR (198 aa).

A C4-type zinc finger spans residues 56–71 (CTECRDFSETKICAIC). A Toprim domain is found at 79-174 (HQLCVVESPP…RPSRLAQGLP (96 aa)).

This sequence belongs to the RecR family.

Functionally, may play a role in DNA repair. It seems to be involved in an RecBC-independent recombinational process of DNA repair. It may act with RecF and RecO. In Xylella fastidiosa (strain 9a5c), this protein is Recombination protein RecR.